Consider the following 1287-residue polypeptide: SCL-interrupting locus protein (1287 aa).

An N-acetylmethionine modification is found at Met-1. The interval 1–1018 is interaction with RBM14; it reads MEPIYPFARP…IDSPTKVKKN (1018 aa). The segment at 231–781 is interaction with CPAP; it reads YKYGYLTMDE…VSVEAQSSPG (551 aa). 2 disordered regions span residues 378 to 417 and 508 to 533; these read RSSQ…SQKI and PPAY…PSHD. Phosphoserine is present on Ser-395. The segment covering 517 to 529 has biased composition (polar residues); the sequence is HTRNSIKPSSHNG. The PIN1-binding stretch occupies residues 584–779; the sequence is PMELQIPTPP…ELVSVEAQSS (196 aa). Ser-753, Ser-779, and Ser-1135 each carry phosphoserine.

Homodimer. Interacts with PIN1 via its WW domain. This interaction is dependent on STIL mitotic phosphorylation. Interacts with CPAP. Interacts with RBM14 and this interaction interferes with the interaction of STIL with CPAP. Forms a complex with CPAP and SASS6. Interacts (via N-terminus) with CEP85; this interaction is essential for efficient centriolar targeting of STIL and subsequent PLK4 activation. In terms of processing, ubiquitinated. Phosphorylated following the activation of the mitotic checkpoint. Expressed in all hematopoietic tissues and cell lines. Highly expressed in a variety of tumors characterized by increased mitotic activity with highest expression in lung cancer.

It is found in the cytoplasm. The protein localises to the cytosol. The protein resides in the cytoskeleton. It localises to the microtubule organizing center. Its subcellular location is the centrosome. It is found in the centriole. The protein localises to the cell cortex. Its function is as follows. Immediate-early gene. Plays an important role in embryonic development as well as in cellular growth and proliferation; its long-term silencing affects cell survival and cell cycle distribution as well as decreases CDK1 activity correlated with reduced phosphorylation of CDK1. Plays a role as a positive regulator of the sonic hedgehog pathway, acting downstream of PTCH1. Plays an important role in the regulation of centriole duplication. Required for the onset of procentriole formation and proper mitotic progression. During procentriole formation, is essential for the correct loading of SASS6 and CPAP to the base of the procentriole to initiate procentriole assembly. In complex with STIL acts as a modulator of PLK4-driven cytoskeletal rearrangements and directional cell motility. The sequence is that of SCL-interrupting locus protein (STIL) from Homo sapiens (Human).